The chain runs to 282 residues: Glycine betaine/carnitine transport permease protein GbuB (282 aa).

6 consecutive transmembrane segments (helical) span residues 44 to 64 (VFDL…TFWV), 70 to 90 (KWGL…LDFW), 99 to 119 (LVLT…IWMA), 140 to 160 (AFVY…PGVV), 220 to 240 (IMLA…GLGT), and 251 to 271 (AGGG…LDRL). Residues 93–272 (MTQTLTLVLT…IVAIILDRLT (180 aa)) form the ABC transmembrane type-1 domain.

Belongs to the binding-protein-dependent transport system permease family. The complex is composed of two ATP-binding proteins (GbuA), two transmembrane proteins (GbuB) and a solute-binding protein (GbuC).

Its subcellular location is the cell membrane. With respect to regulation, the complex is activated by an osmotic gradient or by low temperature. Functionally, part of the ABC transporter complex GbuABC involved in glycine betaine uptake. Responsible for the translocation of the substrate across the membrane. Involved, with BetL and OpuC, in osmoprotection and cryoprotection of Listeria. Can also uptake carnitine when carnitine is abundant in the growth medium. This chain is Glycine betaine/carnitine transport permease protein GbuB (gbuB), found in Listeria monocytogenes serotype 1/2a (strain 10403S).